A 323-amino-acid polypeptide reads, in one-letter code: MIDFGNFYSLIAKNHLSHWLETLPAQIANWQREQQHGLFKQWSNAVEFLPEIKPYRLDLLHSVTAESEEPLSAGQIKRIETLMRNLMPWRKGPFSLYGVNIDTEWRSDWKWDRVLPHLSDLTGRTILDVGCGSGYHMWRMIGAGAHLAVGIDPTQLFLCQFEAVRKLLGNDQRAHLLPLGIEQLPALKAFDTVFSMGVLYHRRSPLEHLWQLKDQLVNEGELVLETLVIDGDENTVLVPGDRYAQMRNVYFIPSALALKNWLKKCGFVDIRIVDVCVTTTEEQRRTEWMVTESLSDFLDPHDPSKTVEGYPAPKRAVLIARKP.

Residues Lys91, Trp105, Lys110, Gly130, 152-154 (DPT), 181-182 (IE), Met196, Tyr200, and Arg315 contribute to the carboxy-S-adenosyl-L-methionine site.

The protein belongs to the class I-like SAM-binding methyltransferase superfamily. CmoB family. In terms of assembly, homotetramer.

It carries out the reaction carboxy-S-adenosyl-L-methionine + 5-hydroxyuridine(34) in tRNA = 5-carboxymethoxyuridine(34) in tRNA + S-adenosyl-L-homocysteine + H(+). Catalyzes carboxymethyl transfer from carboxy-S-adenosyl-L-methionine (Cx-SAM) to 5-hydroxyuridine (ho5U) to form 5-carboxymethoxyuridine (cmo5U) at position 34 in tRNAs. In Escherichia coli O139:H28 (strain E24377A / ETEC), this protein is tRNA U34 carboxymethyltransferase.